We begin with the raw amino-acid sequence, 815 residues long: Ataxin-1 (815 aa).

Over residues 1-41 the composition is skewed to basic and acidic residues; it reads MKSNQERSNECLPPKKREIPATSRSSEEKAPTLPSDNHRVE. The tract at residues 1 to 63 is disordered; it reads MKSNQERSNE…GHGGGRHGPA (63 aa). Residue K16 forms a Glycyl lysine isopeptide (Lys-Gly) (interchain with G-Cter in SUMO) linkage. Gly residues predominate over residues 49 to 61; the sequence is NPGGRGHGGGRHG. 2 positions are modified to phosphoserine: S82 and S88. Disordered regions lie at residues 185 to 270, 329 to 355, and 397 to 424; these read GSLS…PVHL, EKSRRYGAPSSADLGLGKAGGKSVPHP, and VQQATHREASPSTLNDKSGLHLGKPGHR. Residue K194 forms a Glycyl lysine isopeptide (Lys-Gly) (interchain with G-Cter in SUMO) linkage. The span at 197-226 shows a compositional bias: low complexity; it reads QQQQQQQQQQQQHQHQQQQQQQQQQQQQQH. Residues S238 and S253 each carry the phosphoserine modification. A compositionally biased stretch (polar residues) spans 243–260; it reads QQNQYVHISSSPQNTGRT. The tract at residues 494–604 is self-association; the sequence is VGSTDMEASG…TEDFIQSAEI (111 aa). The segment at 538 to 815 is interaction with USP7; that stretch reads LVTQAAYPAM…CIEGRSNVGK (278 aa). Residues 540–766 form an RNA-binding region; sequence TQAAYPAMVQ…FLTKIEPSKP (227 aa). In terms of domain architecture, AXH spans 562-693; it reads SPAAAPPTLP…SLTLKNLKNG (132 aa). Glycyl lysine isopeptide (Lys-Gly) (interchain with G-Cter in SUMO) cross-links involve residues K609, K696, and K745. Residues 762 to 798 form a disordered region; that stretch reads EPSKPAATRKRRWSAPESRKLEKSEDEPPLTLPKPSL. Position 775 is a phosphoserine (S775). The short motif at 794–797 is the Nuclear localization signal element; the sequence is PKPS.

This sequence belongs to the ATXN1 family. As to quaternary structure, homooligomer. Interacts with CIC. Interacts with ANP32A, PQBP1, UBQLN4, ATXN1L and USP7. Directly interacts with RBPJ; this interaction is disrupted in the presence of Notch intracellular domain. Competes with ATXN1L for RBPJ-binding. Found in a complex with CIC and ATXN1L. In terms of processing, ubiquitinated by UBE3A, leading to its degradation by the proteasome. The presence of expanded poly-Gln repeats in spinocerebellar ataxia 1 (SCA1) patients impairs ubiquitination and degradation, leading to accumulation of ATXN1 in neurons and subsequent toxicity. Phosphorylation at Ser-775 increases the pathogenicity of proteins with an expanded polyglutamine tract. Post-translationally, sumoylation is dependent on nuclear localization and phosphorylation at Ser-775. It is reduced in the presence of an expanded polyglutamine tract. As to expression, widely expressed throughout the body.

It localises to the cytoplasm. The protein localises to the nucleus. Functionally, chromatin-binding factor that repress Notch signaling in the absence of Notch intracellular domain by acting as a CBF1 corepressor. Binds to the HEY promoter and might assist, along with NCOR2, RBPJ-mediated repression. Binds RNA in vitro. May be involved in RNA metabolism. In concert with CIC and ATXN1L, involved in brain development. This chain is Ataxin-1 (ATXN1), found in Homo sapiens (Human).